The primary structure comprises 99 residues: Integration host factor subunit alpha (99 aa).

The protein belongs to the bacterial histone-like protein family. As to quaternary structure, heterodimer of an alpha and a beta chain.

This protein is one of the two subunits of integration host factor, a specific DNA-binding protein that functions in genetic recombination as well as in transcriptional and translational control. In Anaeromyxobacter sp. (strain Fw109-5), this protein is Integration host factor subunit alpha.